A 181-amino-acid chain; its full sequence is ATP-dependent protease subunit HslV (181 aa).

Thr6 is a catalytic residue. Positions 162, 165, and 168 each coordinate Na(+).

The protein belongs to the peptidase T1B family. HslV subfamily. In terms of assembly, a double ring-shaped homohexamer of HslV is capped on each side by a ring-shaped HslU homohexamer. The assembly of the HslU/HslV complex is dependent on binding of ATP.

It is found in the cytoplasm. The enzyme catalyses ATP-dependent cleavage of peptide bonds with broad specificity.. With respect to regulation, allosterically activated by HslU binding. Functionally, protease subunit of a proteasome-like degradation complex believed to be a general protein degrading machinery. The polypeptide is ATP-dependent protease subunit HslV (Nitratidesulfovibrio vulgaris (strain ATCC 29579 / DSM 644 / CCUG 34227 / NCIMB 8303 / VKM B-1760 / Hildenborough) (Desulfovibrio vulgaris)).